A 326-amino-acid polypeptide reads, in one-letter code: tRNA-modifying protein YgfZ (326 aa).

Residues Trp-27 and Trp-189 each coordinate folate.

Belongs to the tRNA-modifying YgfZ family.

Its subcellular location is the cytoplasm. Functionally, folate-binding protein involved in regulating the level of ATP-DnaA and in the modification of some tRNAs. It is probably a key factor in regulatory networks that act via tRNA modification, such as initiation of chromosomal replication. This Salmonella typhimurium (strain LT2 / SGSC1412 / ATCC 700720) protein is tRNA-modifying protein YgfZ.